Reading from the N-terminus, the 376-residue chain is Histidinol-phosphate aminotransferase (376 aa).

Residues 1 to 21 are disordered; it reads MQPRDLSAHEPYVPGRGTKEV. At Lys222 the chain carries N6-(pyridoxal phosphate)lysine.

This sequence belongs to the class-II pyridoxal-phosphate-dependent aminotransferase family. Histidinol-phosphate aminotransferase subfamily. The cofactor is pyridoxal 5'-phosphate.

The catalysed reaction is L-histidinol phosphate + 2-oxoglutarate = 3-(imidazol-4-yl)-2-oxopropyl phosphate + L-glutamate. The protein operates within amino-acid biosynthesis; L-histidine biosynthesis; L-histidine from 5-phospho-alpha-D-ribose 1-diphosphate: step 7/9. This is Histidinol-phosphate aminotransferase from Haloquadratum walsbyi (strain DSM 16790 / HBSQ001).